The chain runs to 76 residues: Omega-scoloptoxin(13)-Ssm2b (76 aa).

The N-terminal stretch at 1-22 is a signal peptide; that stretch reads MAYIYALIFAIVVCMNTDVIQA.

The protein belongs to the scoloptoxin-13 family. Contains 3 disulfide bonds. Expressed by the venom gland.

The protein resides in the secreted. Functionally, inhibits voltage-gated calcium channel (Cav) currents. This is Omega-scoloptoxin(13)-Ssm2b from Scolopendra mutilans (Chinese red-headed centipede).